The following is a 532-amino-acid chain: Flavin-containing monooxygenase 1 (532 aa).

Topologically, residues 1–510 are lumenal; sequence MVKRVAIVGA…TRTIQESPSS (510 aa). FAD is bound by residues 9-13, Glu32, 40-41, and 61-62; these read GAGVS, LW, and NS. NADP(+)-binding positions include 60 to 61 and 195 to 198; these read SN and SGTD. A helical transmembrane segment spans residues 511–531; it reads FETLLKLFSFLALLIAVFLIF. Leu532 is a topological domain (cytoplasmic).

This sequence belongs to the FMO family. FAD serves as cofactor. As to expression, liver.

Its subcellular location is the endoplasmic reticulum membrane. The catalysed reaction is hypotaurine + NADPH + O2 + H(+) = taurine + NADP(+) + H2O. It catalyses the reaction hypotaurine + NADH + O2 + H(+) = taurine + NAD(+) + H2O. It carries out the reaction trimethylamine + NADPH + O2 = trimethylamine N-oxide + NADP(+) + H2O. The enzyme catalyses N,N-dimethylaniline + NADPH + O2 + H(+) = N,N-dimethylaniline N-oxide + NADP(+) + H2O. In terms of biological role, broad spectrum monooxygenase that catalyzes the oxygenation of a wide variety of nitrogen- and sulfur-containing compounds including xenobiotics. Catalyzes the S-oxygenation of hypotaurine to produce taurine, an organic osmolyte involved in cell volume regulation as well as a variety of cytoprotective and developmental processes. In vitro, catalyzes the N-oxygenation of trimethylamine (TMA) to produce trimethylamine N-oxide (TMAO) and could therefore participate to the detoxification of this compound that is generated by the action of gut microbiota from dietary precursors such as choline, choline containing compounds, betaine or L-carnitine. The chain is Flavin-containing monooxygenase 1 from Mus musculus (Mouse).